Consider the following 126-residue polypeptide: Probable V-type proton ATPase subunit G (126 aa).

It belongs to the V-ATPase G subunit family. V-ATPase is a heteromultimeric enzyme made up of two complexes: the ATP-hydrolytic V1 complex and the proton translocation V0 complex. The V1 complex consists of three catalytic AB heterodimers that form a heterohexamer, three peripheral stalks each consisting of EG heterodimers, one central rotor including subunits D and F, and the regulatory subunits C and H. The proton translocation complex V0 consists of the proton transport subunit a, a ring of proteolipid subunits c9c'', rotary subunit d, subunits e and f, and the accessory subunits vah-19/Ac45 and vah-20/PRR. Interacts with ced-1.

Functionally, subunit of the V1 complex of vacuolar(H+)-ATPase (V-ATPase), a multisubunit enzyme composed of a peripheral complex (V1) that hydrolyzes ATP and a membrane integral complex (V0) that translocates protons. V-ATPase is responsible for acidifying and maintaining the pH of intracellular compartments and in some cell types, is targeted to the plasma membrane, where it is responsible for acidifying the extracellular environment. In neurons, required for necrotic cell death by promoting intracellular acidification. In Caenorhabditis elegans, this protein is Probable V-type proton ATPase subunit G.